The chain runs to 438 residues: Polycomb protein eed-A (438 aa).

Residues 1–67 (MSEASGRAAG…NAPGRKAWGK (67 aa)) form a disordered region. Residues 40 to 57 (SIESGTNTERPDTPTNAA) show a composition bias toward polar residues. WD repeat units lie at residues 88 to 131 (DHNQ…DIRL), 139 to 182 (DADE…CIKH), 185 to 225 (GHGN…LVAI), 231 to 270 (GHRD…MKTA), 301 to 338 (IHRN…DDID), 356 to 396 (SQCD…PHKA), and 405 to 438 (KCAS…DRLR).

This sequence belongs to the WD repeat ESC family. Component of the prc2/eed-ezh2 complex. Interacts with yy1. Can interact with ezh2, hdac1 and taf9.

The protein resides in the nucleus. In terms of biological role, polycomb group (PcG) protein. Component of the prc2/eed-ezh2 complex, which methylates 'Lys-9' and 'Lys-27' of histone H3, leading to transcriptional repression of the affected target gene. The sequence is that of Polycomb protein eed-A (eed-a) from Xenopus laevis (African clawed frog).